The following is a 282-amino-acid chain: 4-diphosphocytidyl-2-C-methyl-D-erythritol kinase (282 aa).

K11 is a catalytic residue. 93–103 (LVSAGLAGGSA) is a binding site for ATP. Residue D133 is part of the active site.

This sequence belongs to the GHMP kinase family. IspE subfamily.

The enzyme catalyses 4-CDP-2-C-methyl-D-erythritol + ATP = 4-CDP-2-C-methyl-D-erythritol 2-phosphate + ADP + H(+). Its pathway is isoprenoid biosynthesis; isopentenyl diphosphate biosynthesis via DXP pathway; isopentenyl diphosphate from 1-deoxy-D-xylulose 5-phosphate: step 3/6. Functionally, catalyzes the phosphorylation of the position 2 hydroxy group of 4-diphosphocytidyl-2C-methyl-D-erythritol. This Ehrlichia chaffeensis (strain ATCC CRL-10679 / Arkansas) protein is 4-diphosphocytidyl-2-C-methyl-D-erythritol kinase.